A 549-amino-acid polypeptide reads, in one-letter code: Zinc finger protein 266 (549 aa).

Residues 1–42 enclose the KRAB domain; that stretch reads MLENYKNLATVGYQLFKPSLISWLEQEESRTVQRGDFQASEW. The C2H2-type 1; degenerate zinc finger occupies 156 to 178; the sequence is FDCSDSGKSFINHSHLQGHLRTH. A C2H2-type 2; degenerate zinc finger spans residues 184–206; the sequence is HEWKECGRGFIHSTDLAVRIQTH. 12 consecutive C2H2-type zinc fingers follow at residues 212–234, 240–262, 268–290, 296–318, 324–346, 352–374, 380–402, 408–430, 436–458, 464–486, 492–514, and 520–542; these read YKCK…MGTH, YECK…RKTH, YKCK…MKIH, YECK…LKTH, FECK…FRIH, YKCK…ARTH, YECK…TRTH, FECV…LRIH, FECL…MRTH, FTCM…MRIH, YKCK…ERTH, and YECK…ERRH. Positions 530 to 549 are disordered; sequence SSSSSFRNHERRHADERLSA.

This sequence belongs to the krueppel C2H2-type zinc-finger protein family.

The protein resides in the nucleus. In terms of biological role, may be involved in transcriptional regulation. The sequence is that of Zinc finger protein 266 (ZNF266) from Homo sapiens (Human).